A 562-amino-acid chain; its full sequence is Gut esterase 1 (562 aa).

An N-terminal signal peptide occupies residues 1–16; sequence MRVLLASLLIFGACWA. A disulfide bridge connects residues Cys75 and Cys93. Ser199 functions as the Acyl-ester intermediate in the catalytic mechanism. The cysteines at positions 251 and 259 are disulfide-linked. Active-site charge relay system residues include Glu320 and His451. The short motif at 559–562 is the Prevents secretion from ER element; the sequence is KDEL.

Belongs to the type-B carboxylesterase/lipase family. Expressed only in the intestine.

It is found in the endoplasmic reticulum lumen. The enzyme catalyses a carboxylic ester + H2O = an alcohol + a carboxylate + H(+). The polypeptide is Gut esterase 1 (ges-1) (Caenorhabditis briggsae).